Reading from the N-terminus, the 413-residue chain is 3-hydroxy-3-methylglutaryl-coenzyme A reductase (413 aa).

Catalysis depends on charge relay system residues E106 and D312. The active-site Proton donor is the H408.

The protein belongs to the HMG-CoA reductase family.

It catalyses the reaction (R)-mevalonate + 2 NADP(+) + CoA = (3S)-3-hydroxy-3-methylglutaryl-CoA + 2 NADPH + 2 H(+). It functions in the pathway metabolic intermediate biosynthesis; (R)-mevalonate biosynthesis; (R)-mevalonate from acetyl-CoA: step 3/3. In terms of biological role, converts HMG-CoA to mevalonate. The protein is 3-hydroxy-3-methylglutaryl-coenzyme A reductase (hmgA) of Pyrococcus horikoshii (strain ATCC 700860 / DSM 12428 / JCM 9974 / NBRC 100139 / OT-3).